We begin with the raw amino-acid sequence, 941 residues long: Probable lipoxygenase 8, chloroplastic (941 aa).

Disordered stretches follow at residues 1 to 22 (MLRP…SSSS) and 45 to 68 (LIAG…VVRC). The N-terminal 67 residues, 1–67 (MLRPQLNPSS…QQGRQRVVVR (67 aa)), are a transit peptide targeting the chloroplast. One can recognise a PLAT domain in the interval 100-236 (AVATIKVTVE…SIDEGTPGKR (137 aa)). The region spanning 242 to 941 (AYLPGQTPAG…GMGIPNSTSI (700 aa)) is the Lipoxygenase domain. Disordered regions lie at residues 255 to 274 (YREE…READ) and 288 to 331 (NPDS…RKGN). Basic and acidic residues predominate over residues 319–331 (SKKDPKSETRKGN). The Fe cation site is built by His598, His603, His790, Asn794, and Ile941.

Belongs to the lipoxygenase family. Requires Fe cation as cofactor.

The protein localises to the plastid. It is found in the chloroplast. It catalyses the reaction (9Z,12Z)-octadecadienoate + O2 = (13S)-hydroperoxy-(9Z,11E)-octadecadienoate. The catalysed reaction is (9Z,12Z,15Z)-octadecatrienoate + O2 = (13S)-hydroperoxy-(9Z,11E,15Z)-octadecatrienoate. It functions in the pathway lipid metabolism; oxylipin biosynthesis. Plant lipoxygenase may be involved in a number of diverse aspects of plant physiology including growth and development, pest resistance, and senescence or responses to wounding. It catalyzes the hydroperoxidation of lipids containing a cis,cis-1,4-pentadiene structure. The chain is Probable lipoxygenase 8, chloroplastic (CM-LOX2) from Oryza sativa subsp. japonica (Rice).